The primary structure comprises 891 residues: Alanine--tRNA ligase (891 aa).

Residues histidine 564, histidine 568, cysteine 681, and histidine 685 each coordinate Zn(2+).

It belongs to the class-II aminoacyl-tRNA synthetase family. The cofactor is Zn(2+).

The protein resides in the cytoplasm. It carries out the reaction tRNA(Ala) + L-alanine + ATP = L-alanyl-tRNA(Ala) + AMP + diphosphate. In terms of biological role, catalyzes the attachment of alanine to tRNA(Ala) in a two-step reaction: alanine is first activated by ATP to form Ala-AMP and then transferred to the acceptor end of tRNA(Ala). Also edits incorrectly charged Ser-tRNA(Ala) and Gly-tRNA(Ala) via its editing domain. This Methylorubrum extorquens (strain PA1) (Methylobacterium extorquens) protein is Alanine--tRNA ligase.